A 104-amino-acid polypeptide reads, in one-letter code: UPF0213 protein in VLF1-GP41 intergenic region (104 aa).

In terms of domain architecture, GIY-YIG spans 9–89 (KVWCVYILRQ…SKYFKLRLIK (81 aa)).

The protein belongs to the UPF0213 family.

The chain is UPF0213 protein in VLF1-GP41 intergenic region from Autographa californica nuclear polyhedrosis virus (AcMNPV).